The sequence spans 92 residues: Protein S100-B (92 aa).

N-acetylserine is present on Ser2. EF-hand domains follow at residues 13-48 (DVFH…LEEI) and 49-84 (KEQE…VTTA). His16 is a binding site for Zn(2+). Ca(2+)-binding residues include Ser19, Glu22, and Asp24. Zn(2+) is bound at residue His26. Residues Asp62, Asp64, Asp66, Glu68, and Glu73 each contribute to the Ca(2+) site. The Zn(2+) site is built by His86 and His91.

This sequence belongs to the S-100 family. In terms of assembly, dimer of either two alpha chains, or two beta chains, or one alpha and one beta chain. The S100B dimer binds two molecules of STK38. Interacts with CACYBP in a calcium-dependent manner. Interacts with ATAD3A; this interaction probably occurs in the cytosol prior to ATAD3A mitochondrial targeting. Interacts with S100A6. The S100B dimer interacts with two molecules of CAPZA1. Interacts with AGER. Interacts with PPP5C (via TPR repeats); the interaction is calcium-dependent and modulates PPP5C activity. Interacts with TPPP; this interaction inhibits TPPP dimerization. Interacts with isoform CLSTN3beta of CLSTN3; interaction promotes secretion.

The protein localises to the cytoplasm. Its subcellular location is the nucleus. The protein resides in the secreted. Its function is as follows. Small zinc- and- and calcium-binding protein that is highly expressed in astrocytes and constitutes one of the most abundant soluble proteins in brain. Weakly binds calcium but binds zinc very tightly-distinct binding sites with different affinities exist for both ions on each monomer. Physiological concentrations of potassium ion antagonize the binding of both divalent cations, especially affecting high-affinity calcium-binding sites. Acts as a neurotrophic factor that promotes astrocytosis and axonal proliferation. Involved in innervation of thermogenic adipose tissue by acting as an adipocyte-derived neurotrophic factor that promotes sympathetic innervation of adipose tissue. Binds to and initiates the activation of STK38 by releasing autoinhibitory intramolecular interactions within the kinase. Interaction with AGER after myocardial infarction may play a role in myocyte apoptosis by activating ERK1/2 and p53/TP53 signaling. Could assist ATAD3A cytoplasmic processing, preventing aggregation and favoring mitochondrial localization. May mediate calcium-dependent regulation on many physiological processes by interacting with other proteins, such as TPR-containing proteins, and modulating their activity. The sequence is that of Protein S100-B from Mus musculus (Mouse).